Consider the following 5125-residue polypeptide: Usherin (5125 aa).

Positions 1-33 (MYYLALSSGFLGQAIKTSILAYLASVLLAASQG) are cleaved as a signal peptide. N-linked (GlcNAc...) asparagine glycosylation is found at asparagine 120, asparagine 229, asparagine 257, asparagine 273, asparagine 414, asparagine 447, and asparagine 468. Residues 273-513 (NVSLTNREIL…AVDEITIIGR (241 aa)) form the Laminin N-terminal domain. 39 disulfides stabilise this stretch: cysteine 514-cysteine 523, cysteine 516-cysteine 532, cysteine 534-cysteine 545, cysteine 548-cysteine 568, cysteine 571-cysteine 580, cysteine 573-cysteine 601, cysteine 604-cysteine 613, cysteine 616-cysteine 634, cysteine 637-cysteine 651, cysteine 639-cysteine 658, cysteine 660-cysteine 669, cysteine 672-cysteine 687, cysteine 690-cysteine 704, cysteine 692-cysteine 711, cysteine 713-cysteine 722, cysteine 725-cysteine 740, cysteine 743-cysteine 755, cysteine 745-cysteine 762, cysteine 764-cysteine 773, cysteine 776-cysteine 788, cysteine 791-cysteine 804, cysteine 793-cysteine 811, cysteine 813-cysteine 822, cysteine 825-cysteine 840, cysteine 843-cysteine 857, cysteine 845-cysteine 864, cysteine 866-cysteine 875, cysteine 878-cysteine 893, cysteine 896-cysteine 909, cysteine 898-cysteine 916, cysteine 918-cysteine 927, cysteine 930-cysteine 944, cysteine 947-cysteine 959, cysteine 949-cysteine 966, cysteine 981-cysteine 995, cysteine 998-cysteine 1010, cysteine 1000-cysteine 1017, cysteine 1019-cysteine 1028, and cysteine 1031-cysteine 1046. Laminin EGF-like domains lie at 514–570 (CQCH…NCKP), 571–636 (CQCH…VCKH), 637–689 (CDCN…CCRP), 690–742 (CDCN…GCEP), 743–790 (CHCN…ACEV), 791–842 (CDCN…LCLP), 843–895 (CNCE…GCQA), 896–946 (CDCD…GCLP), 947–997 (CLCH…RCRP), and 998–1048 (CHCH…ACSK). Asparagine 646 carries N-linked (GlcNAc...) asparagine glycosylation. 2 N-linked (GlcNAc...) asparagine glycosylation sites follow: asparagine 835 and asparagine 852. Residue asparagine 884 is glycosylated (N-linked (GlcNAc...) asparagine). The N-linked (GlcNAc...) asparagine glycan is linked to asparagine 940. A glycan (N-linked (GlcNAc...) asparagine) is linked at asparagine 1007. 4 consecutive Fibronectin type-III domains span residues 1054-1142 (PPPR…TKPE), 1146-1240 (GHLN…APPQ), 1241-1356 (RQEP…SAPV), and 1357-1461 (FMAA…AAPA). N-linked (GlcNAc...) asparagine glycosylation is found at asparagine 1067, asparagine 1149, asparagine 1170, asparagine 1221, asparagine 1304, and asparagine 1381. Laminin G-like domains lie at 1510–1697 (TKGT…WEGC) and 1702–1879 (EEGV…QDGC). 2 disulfides stabilise this stretch: cysteine 1660/cysteine 1697 and cysteine 1850/cysteine 1879. 29 Fibronectin type-III domains span residues 1857–1943 (TRGA…SAPH), 1945–2042 (VPTP…TPQE), 2043–2132 (APQE…LPPE), 2133–2230 (RVDP…TVPE), 2231–2318 (GVPA…APPE), 2319–2421 (GTVN…MPPG), 2425–2519 (GLLS…TTED), 2520–2613 (KPGP…TPEG), 2614–2709 (IPGP…TRPS), 2713–2806 (GVQP…THPA), 2807–2910 (LPQE…TLAG), 2914–3005 (RGAT…TWEE), 3009–3099 (GMRP…TPSG), 3380–3485 (ATEE…TRED), 3486–3577 (VPQG…TRGV), 3580–3670 (SVPP…AAPQ), 3672–3762 (VWVT…TPED), 3765–3852 (PPCN…TLEA), 3853–3950 (APVG…TLEA), 3951–4054 (PPQD…SAPS), 4055–4143 (GLMN…APPD), 4144–4251 (SQMA…APPD), 4252–4344 (GLSP…ASPA), 4345–4432 (GVSP…APPE), 4433–4517 (DMDP…TSPS), 4518–4620 (APSG…IPPL), 4625–4720 (PHLE…TGPA), 4721–4813 (PPEG…THPA), and 4814–4916 (PPSG…TKKE). Residues 1930-1950 (SDWSRGRTLGSAPHSVPTPSR) are disordered.

As to quaternary structure, interacts with collagen IV and fibronectin via its laminin EGF-like domains. Interaction with collagen may be required for stable integration into the basement membrane. Interacts with NINL. Interacts with USH1C. Interacts (via the cytoplasmic region) with PDZD7. Component of USH2 complex, composed of ADGRV1, PDZD7, USH2A and WHRN. Interacts with ADGRV1/MASS1 (via N-terminal PDZ domain). Interacts (via the cytoplasmic region) with WHRN. Interacts (via the cytoplasmic region) with VEZT and MYO7A (via MyTH4-FERM domains); the interaction associates VEZT with the USH2 complex at the stereocilia base. As to expression, present in the synaptic terminals of inner ear hair cells (at protein level). Predominantly expressed in the retina and cochlea. Weakly expressed in brain and kidney. Detectable from E17 in the neural epithelium, but not in the retinal pigment epithelium (RPE) of the developing retina. After birth, it is expressed at P7 and remains expressed during adulthood.

It localises to the secreted. It is found in the cell projection. The protein resides in the stereocilium membrane. The protein localises to the photoreceptor inner segment. Functionally, involved in hearing and vision as member of the USH2 complex. In the inner ear, required for the hair bundle ankle formation, which connects growing stereocilia in developing cochlear hair cells. In retina photoreceptors, the USH2 complex is required for the maintenance of periciliary membrane complex that seems to play a role in regulating intracellular protein transport. The protein is Usherin (Ush2a) of Rattus norvegicus (Rat).